Reading from the N-terminus, the 245-residue chain is 1-(5-phosphoribosyl)-5-[(5-phosphoribosylamino)methylideneamino] imidazole-4-carboxamide isomerase (245 aa).

Residue D7 is the Proton acceptor of the active site. Residue D129 is the Proton donor of the active site.

Belongs to the HisA/HisF family.

It localises to the cytoplasm. It carries out the reaction 1-(5-phospho-beta-D-ribosyl)-5-[(5-phospho-beta-D-ribosylamino)methylideneamino]imidazole-4-carboxamide = 5-[(5-phospho-1-deoxy-D-ribulos-1-ylimino)methylamino]-1-(5-phospho-beta-D-ribosyl)imidazole-4-carboxamide. It functions in the pathway amino-acid biosynthesis; L-histidine biosynthesis; L-histidine from 5-phospho-alpha-D-ribose 1-diphosphate: step 4/9. The sequence is that of 1-(5-phosphoribosyl)-5-[(5-phosphoribosylamino)methylideneamino] imidazole-4-carboxamide isomerase from Shewanella sp. (strain W3-18-1).